We begin with the raw amino-acid sequence, 231 residues long: Ubiquinone biosynthesis protein coq-4, mitochondrial (231 aa).

Residues H133, D134, H137, and E149 each contribute to the Zn(2+) site.

The protein belongs to the COQ4 family. As to quaternary structure, component of a multi-subunit COQ enzyme complex. Requires Zn(2+) as cofactor.

The protein resides in the mitochondrion inner membrane. The catalysed reaction is a 4-hydroxy-3-methoxy-5-(all-trans-polyprenyl)benzoate + H(+) = a 2-methoxy-6-(all-trans-polyprenyl)phenol + CO2. The protein operates within cofactor biosynthesis; ubiquinone biosynthesis. Lyase that catalyzes the C1-decarboxylation of 4-hydroxy-3-methoxy-5-(all-trans-polyprenyl)benzoic acid into 2-methoxy-6-(all-trans-polyprenyl)phenol during ubiquinone biosynthesis. This chain is Ubiquinone biosynthesis protein coq-4, mitochondrial, found in Caenorhabditis elegans.